A 200-amino-acid chain; its full sequence is Probable nicotinate-nucleotide adenylyltransferase (200 aa).

It belongs to the NadD family.

It carries out the reaction nicotinate beta-D-ribonucleotide + ATP + H(+) = deamido-NAD(+) + diphosphate. The protein operates within cofactor biosynthesis; NAD(+) biosynthesis; deamido-NAD(+) from nicotinate D-ribonucleotide: step 1/1. In terms of biological role, catalyzes the reversible adenylation of nicotinate mononucleotide (NaMN) to nicotinic acid adenine dinucleotide (NaAD). The polypeptide is Probable nicotinate-nucleotide adenylyltransferase (Clostridium botulinum (strain Alaska E43 / Type E3)).